The following is a 322-amino-acid chain: ATP-dependent 6-phosphofructokinase (322 aa).

Glycine 11 provides a ligand contact to ATP. 21-25 (RAVVR) is an ADP binding site. Residues 72–73 (RC) and 102–105 (GDGS) each bind ATP. Aspartate 103 provides a ligand contact to Mg(2+). 127–129 (TID) provides a ligand contact to substrate. Aspartate 129 serves as the catalytic Proton acceptor. Arginine 156 provides a ligand contact to ADP. Substrate contacts are provided by residues arginine 164 and 171 to 173 (MGR). ADP contacts are provided by residues 187–189 (GAE), arginine 213, and 215–217 (KKH). Substrate-binding positions include glutamate 224, arginine 245, and 251-254 (HVQR).

The protein belongs to the phosphofructokinase type A (PFKA) family. ATP-dependent PFK group I subfamily. Prokaryotic clade 'B1' sub-subfamily. As to quaternary structure, homotetramer. Mg(2+) is required as a cofactor.

Its subcellular location is the cytoplasm. The enzyme catalyses beta-D-fructose 6-phosphate + ATP = beta-D-fructose 1,6-bisphosphate + ADP + H(+). It participates in carbohydrate degradation; glycolysis; D-glyceraldehyde 3-phosphate and glycerone phosphate from D-glucose: step 3/4. Its activity is regulated as follows. Allosterically activated by ADP and other diphosphonucleosides, and allosterically inhibited by phosphoenolpyruvate. Catalyzes the phosphorylation of D-fructose 6-phosphate to fructose 1,6-bisphosphate by ATP, the first committing step of glycolysis. This chain is ATP-dependent 6-phosphofructokinase, found in Staphylococcus aureus (strain MRSA252).